A 329-amino-acid chain; its full sequence is Vitamin B12 import system permease protein BtuC (329 aa).

Transmembrane regions (helical) follow at residues 22–42 (LSVLMLLAVVLSLCAGDQWIA), 64–84 (LAVLLVGAALALSGAVMQALF), 91–111 (PGLLGVSNGAGVGLIAAVLLG), 115–135 (LPGWALGFCAIAGALIITLIL), 149–169 (LLAGVALGIICSAMMTWAIYF), 187–207 (GGVDWQQAWLMIALIPVSLWI), 243–263 (GWMVGVSVALAGSIGFIGLVI), 277–297 (ALLPGCALAGAIALLLADVIA), and 305–325 (ELPIGVVTATMGAPVFIWLLL).

The protein belongs to the binding-protein-dependent transport system permease family. FecCD subfamily. As to quaternary structure, the complex is composed of two ATP-binding proteins (BtuD), two transmembrane proteins (BtuC) and a solute-binding protein (BtuF).

It is found in the cell inner membrane. Part of the ABC transporter complex BtuCDF involved in vitamin B12 import. Involved in the translocation of the substrate across the membrane. This is Vitamin B12 import system permease protein BtuC from Citrobacter koseri (strain ATCC BAA-895 / CDC 4225-83 / SGSC4696).